Here is a 404-residue protein sequence, read N- to C-terminus: Glucosyl-3-phosphoglycerate synthase (404 aa).

Aspartate 146 is an a divalent metal cation binding site. A (2R)-3-phosphoglycerate-binding site is contributed by 188 to 190 (GRV). Histidine 270 contributes to the a divalent metal cation binding site.

Belongs to the glycosyltransferase 2 family. The cofactor is Mn(2+). Requires Co(2+) as cofactor. Mg(2+) is required as a cofactor.

The enzyme catalyses an NDP-alpha-D-glucose + (2R)-3-phosphoglycerate = (2R)-2-O-(alpha-D-glucopyranosyl)-3-phospho-glycerate + a ribonucleoside 5'-diphosphate + H(+). In terms of biological role, involved in the biosynthesis of 6-O-methylglucose lipopolysaccarides (MGLPs). Catalyzes the transfer of a glucose (Glc) moiety from uridine diphosphate (UDP-Glc) to the position 2 of 3-phospho-D-glycerate (3-PGA) to form glucosyl-3-phosphoglycerate (GPG). The sequence is that of Glucosyl-3-phosphoglycerate synthase from Methanococcoides burtonii (strain DSM 6242 / NBRC 107633 / OCM 468 / ACE-M).